The following is a 239-amino-acid chain: Serine protease SplD (239 aa).

Positions 1–36 (MNKNIIIKSIAALTILTSITGVGTTVVDGIQQTAKA) are cleaved as a signal peptide. Catalysis depends on charge relay system residues histidine 75, aspartate 114, and serine 192.

This sequence belongs to the peptidase S1B family.

Its subcellular location is the secreted. This is Serine protease SplD (splD) from Staphylococcus aureus (strain COL).